Reading from the N-terminus, the 244-residue chain is Orotidine 5'-phosphate decarboxylase (244 aa).

Substrate is bound by residues aspartate 18, lysine 43, 73-82, serine 130, 182-192, glycine 206, and arginine 207; these read DLKLADIGYI and PGVGAQGGKPG. Lysine 75 functions as the Proton donor in the catalytic mechanism.

It belongs to the OMP decarboxylase family. Type 1 subfamily. As to quaternary structure, homodimer.

It catalyses the reaction orotidine 5'-phosphate + H(+) = UMP + CO2. Its pathway is pyrimidine metabolism; UMP biosynthesis via de novo pathway; UMP from orotate: step 2/2. Its function is as follows. Catalyzes the decarboxylation of orotidine 5'-monophosphate (OMP) to uridine 5'-monophosphate (UMP). In Aeropyrum pernix (strain ATCC 700893 / DSM 11879 / JCM 9820 / NBRC 100138 / K1), this protein is Orotidine 5'-phosphate decarboxylase.